Here is a 361-residue protein sequence, read N- to C-terminus: Large ribosomal subunit protein uL3 (361 aa).

Over residues 1–14 the composition is skewed to basic residues; the sequence is MGRGGRRNPGRPRR. Disordered regions lie at residues 1-33 and 337-361; these read MGRG…PRIR and TSQQ…PASA.

The protein belongs to the universal ribosomal protein uL3 family. As to quaternary structure, part of the 50S ribosomal subunit. Forms a cluster with proteins L14 and L24e.

In terms of biological role, one of the primary rRNA binding proteins, it binds directly near the 3'-end of the 23S rRNA, where it nucleates assembly of the 50S subunit. The sequence is that of Large ribosomal subunit protein uL3 from Methanopyrus kandleri (strain AV19 / DSM 6324 / JCM 9639 / NBRC 100938).